A 1224-amino-acid chain; its full sequence is ATP-dependent helicase/deoxyribonuclease subunit B (1224 aa).

One can recognise a UvrD-like helicase ATP-binding domain in the interval Met1–Glu326. Gly8–Ser15 is a binding site for ATP. Positions Gln283–Asp584 constitute a UvrD-like helicase C-terminal domain. [4Fe-4S] cluster is bound by residues Cys841, Cys1176, Cys1179, and Cys1185.

It belongs to the helicase family. AddB/RexB type 1 subfamily. As to quaternary structure, heterodimer of AddA and AddB. Requires Mg(2+) as cofactor. It depends on [4Fe-4S] cluster as a cofactor.

In terms of biological role, the heterodimer acts as both an ATP-dependent DNA helicase and an ATP-dependent, dual-direction single-stranded exonuclease. Recognizes the chi site generating a DNA molecule suitable for the initiation of homologous recombination. The AddB subunit has 5' -&gt; 3' nuclease activity but not helicase activity. This is ATP-dependent helicase/deoxyribonuclease subunit B from Heliobacterium modesticaldum (strain ATCC 51547 / Ice1).